A 317-amino-acid polypeptide reads, in one-letter code: UV DNA damage endonuclease (317 aa).

The protein belongs to the uve1/UvsE family.

Its function is as follows. Component in a DNA repair pathway. Removal of UV LIGHT damaged nucleotides. Recognizes pyrimidine dimers and cleave a phosphodiester bond immediately 5' to the lesion. The sequence is that of UV DNA damage endonuclease from Bacillus cereus (strain 03BB102).